The following is a 193-amino-acid chain: Fe/S biogenesis protein NfuA (193 aa).

[4Fe-4S] cluster-binding residues include cysteine 151 and cysteine 154.

Belongs to the NfuA family. Homodimer. [4Fe-4S] cluster serves as cofactor.

Involved in iron-sulfur cluster biogenesis. Binds a 4Fe-4S cluster, can transfer this cluster to apoproteins, and thereby intervenes in the maturation of Fe/S proteins. Could also act as a scaffold/chaperone for damaged Fe/S proteins. The sequence is that of Fe/S biogenesis protein NfuA from Buchnera aphidicola subsp. Cinara cedri (strain Cc).